Here is a 283-residue protein sequence, read N- to C-terminus: Ribonuclease P protein subunit p38 (283 aa).

Ala2 is subject to N-acetylalanine. Residues Ser12, Ser226, and Ser235 each carry the phosphoserine modification.

This sequence belongs to the eukaryotic ribosomal protein eL8 family. Component of nuclear RNase P and RNase MRP ribonucleoproteins. RNase P consists of a catalytic RNA moiety and about 10 protein subunits; POP1, POP4, POP5, POP7, RPP14, RPP21, RPP25, RPP30, RPP38 and RPP40. Within the RNase P complex, POP1, POP7 and RPP25 form the 'finger' subcomplex, POP5, RPP14, RPP40 and homodimeric RPP30 form the 'palm' subcomplex, and RPP21, POP4 and RPP38 form the 'wrist' subcomplex. All subunits of the RNase P complex interact with the catalytic RNA. Several subunits of RNase P are also part of the RNase MRP complex. RNase MRP consists of a catalytic RNA moiety and about 8 protein subunits; POP1, POP7, RPP25, RPP30, RPP38, RPP40 and possibly also POP4 and POP5.

It localises to the nucleus. Its subcellular location is the nucleolus. Its function is as follows. Component of ribonuclease P, a ribonucleoprotein complex that generates mature tRNA molecules by cleaving their 5'-ends. Also a component of the MRP ribonuclease complex, which cleaves pre-rRNA sequences. The chain is Ribonuclease P protein subunit p38 (RPP38) from Homo sapiens (Human).